Here is a 113-residue protein sequence, read N- to C-terminus: Flagellar hook-basal body complex protein FliE (113 aa).

It belongs to the FliE family.

The protein localises to the bacterial flagellum basal body. The protein is Flagellar hook-basal body complex protein FliE of Rhizobium etli (strain CIAT 652).